The sequence spans 379 residues: Mannitol-1-phosphate 5-dehydrogenase (379 aa).

Residue 3–14 (ALHFGAGNIGRG) participates in NAD(+) binding.

The protein belongs to the mannitol dehydrogenase family.

The catalysed reaction is D-mannitol 1-phosphate + NAD(+) = beta-D-fructose 6-phosphate + NADH + H(+). The sequence is that of Mannitol-1-phosphate 5-dehydrogenase from Actinobacillus pleuropneumoniae serotype 5b (strain L20).